A 617-amino-acid chain; its full sequence is Dihydroxy-acid dehydratase (617 aa).

Mg(2+) is bound at residue aspartate 81. [2Fe-2S] cluster is bound at residue cysteine 122. Residues aspartate 123 and lysine 124 each coordinate Mg(2+). Lysine 124 carries the post-translational modification N6-carboxylysine. Cysteine 195 contributes to the [2Fe-2S] cluster binding site. Glutamate 490 serves as a coordination point for Mg(2+). Serine 516 serves as the catalytic Proton acceptor.

This sequence belongs to the IlvD/Edd family. In terms of assembly, homodimer. [2Fe-2S] cluster is required as a cofactor. Requires Mg(2+) as cofactor.

The catalysed reaction is (2R)-2,3-dihydroxy-3-methylbutanoate = 3-methyl-2-oxobutanoate + H2O. The enzyme catalyses (2R,3R)-2,3-dihydroxy-3-methylpentanoate = (S)-3-methyl-2-oxopentanoate + H2O. The protein operates within amino-acid biosynthesis; L-isoleucine biosynthesis; L-isoleucine from 2-oxobutanoate: step 3/4. It functions in the pathway amino-acid biosynthesis; L-valine biosynthesis; L-valine from pyruvate: step 3/4. Its function is as follows. Functions in the biosynthesis of branched-chain amino acids. Catalyzes the dehydration of (2R,3R)-2,3-dihydroxy-3-methylpentanoate (2,3-dihydroxy-3-methylvalerate) into 2-oxo-3-methylpentanoate (2-oxo-3-methylvalerate) and of (2R)-2,3-dihydroxy-3-methylbutanoate (2,3-dihydroxyisovalerate) into 2-oxo-3-methylbutanoate (2-oxoisovalerate), the penultimate precursor to L-isoleucine and L-valine, respectively. The sequence is that of Dihydroxy-acid dehydratase from Acidiphilium cryptum (strain JF-5).